The following is a 1023-amino-acid chain: Sodium/potassium-transporting ATPase subunit alpha-1 (1023 aa).

Residues 1-5 (MAFKV) constitute a propeptide that is removed on maturation. A compositionally biased stretch (basic and acidic residues) spans 1–11 (MAFKVGRDKYE). The disordered stretch occupies residues 1-38 (MAFKVGRDKYEPAAVSEQGDKKGKKGKKDRDMDELKKE). Residues 6–87 (GRDKYEPAAV…NALTPPPTTP (82 aa)) lie on the Cytoplasmic side of the membrane. Lys-9 bears the N6-acetyllysine mark. Residue Tyr-10 is modified to Phosphotyrosine. The residue at position 16 (Ser-16) is a Phosphoserine; by PKC. Lys-21 carries the N6-acetyllysine modification. Basic and acidic residues predominate over residues 28 to 38 (KDRDMDELKKE). 2 positions are modified to phosphoserine: Ser-40 and Ser-47. The phosphoinositide-3 kinase binding stretch occupies residues 82–84 (PPP). A helical transmembrane segment spans residues 88 to 108 (EWIKFCRQLFGGFSMLLWIGA). Topologically, residues 109–131 (ILCFLAYSIQAATEEEPQNDNLY) are extracellular. Residues 132–152 (LGVVLSAVVIITGCFSYYQEA) form a helical membrane-spanning segment. Residues 153–288 (KSSKIMESFK…GGQTPIAAEI (136 aa)) are Cytoplasmic-facing. A disordered region spans residues 216–235 (SSLTGESEPQTRSPDFTNEN). At Ser-228 the chain carries Phosphoserine. Tyr-260 is modified (phosphotyrosine). A helical transmembrane segment spans residues 289 to 308 (EHFIHIITGVAVFLGVSFFI). Over 309-320 (LSLILEYTWLEA) the chain is Extracellular. The helical transmembrane segment at 321 to 338 (VIFLIGIIVANVPEGLLA) threads the bilayer. The Cytoplasmic portion of the chain corresponds to 339 to 772 (TVTVCLTLTA…EEGRLIFDNL (434 aa)). The active-site 4-aspartylphosphate intermediate is Asp-376. Phosphoserine is present on residues Ser-452 and Ser-484. ATP is bound at residue Lys-487. Tyr-542 is modified (phosphotyrosine). A mediates interaction with SCN7A region spans residues 596–717 (RAAVPDAVGK…QGAIVAVTGD (122 aa)). Lys-661 carries the N6-succinyllysine modification. A phosphoserine mark is found at Ser-668 and Ser-675. Mg(2+)-binding residues include Asp-717 and Asp-721. The chain crosses the membrane as a helical span at residues 773 to 792 (KKSIAYTLTSNIPEITPFLI). Topologically, residues 793-802 (FIIANIPLPL) are extracellular. Residues 803–823 (GTVTILCIDLGTDMVPAISLA) traverse the membrane as a helical segment. Residues 824 to 843 (YEQAESDIMKRQPRNPKTDK) are Cytoplasmic-facing. A helical membrane pass occupies residues 844–866 (LVNERLISTAYGQIGMIQALGGF). At 867–918 (FTYFVILAENGFLPLHLLGLRVDWDDRWINDVEDSYGQQWTYEQRKIVEFTC) the chain is on the extracellular side. Residues 919–938 (HTAFFVSIVVVQWADLVICK) form a helical membrane-spanning segment. The Cytoplasmic segment spans residues 939–951 (TRRNSVFQQGMKN). Ser-943 bears the Phosphoserine; by PKA mark. A helical transmembrane segment spans residues 952–970 (KILIFGLFEETALAAFLSY). Residues 971-985 (CPGMGVALRMYPLKP) are Extracellular-facing. A helical membrane pass occupies residues 986 to 1006 (TWWFCAFPYSLLIFVYDEVRK). Residues 1007 to 1023 (LIIRRRPGGWVEKETYY) are Cytoplasmic-facing.

This sequence belongs to the cation transport ATPase (P-type) (TC 3.A.3) family. Type IIC subfamily. In terms of assembly, the sodium/potassium-transporting ATPase is composed of a catalytic alpha subunit, an auxiliary non-catalytic beta subunit and an additional regulatory subunit. Interacts with regulatory subunit FXYD1. Interacts with regulatory subunit FXYD3. Interacts with SIK1. Interacts with SLC35G1 and STIM1. Interacts with CLN3; this interaction regulates the sodium/potassium-transporting ATPase complex localization at the plasma membrane. Interacts with SCN7A; activates ATP1A1 P-type sodium:potassium-exchanging transporter activity which indirectly signals to nearby neurons to regulate sodium homeostasis. In terms of processing, phosphorylation on Tyr-10 modulates pumping activity. Phosphorylation of Ser-943 by PKA modulates the response of ATP1A1 to PKC. Dephosphorylation by protein phosphatase 2A (PP2A) following increases in intracellular sodium, leading to increase catalytic activity.

It is found in the cell membrane. It localises to the basolateral cell membrane. The protein localises to the sarcolemma. The protein resides in the cell projection. Its subcellular location is the axon. It is found in the melanosome. It catalyses the reaction K(+)(out) + Na(+)(in) + ATP + H2O = K(+)(in) + Na(+)(out) + ADP + phosphate + H(+). This is the catalytic component of the active enzyme, which catalyzes the hydrolysis of ATP coupled with the exchange of sodium and potassium ions across the plasma membrane. This action creates the electrochemical gradient of sodium and potassium ions, providing the energy for active transport of various nutrients. Could also be part of an osmosensory signaling pathway that senses body-fluid sodium levels and controls salt intake behavior as well as voluntary water intake to regulate sodium homeostasis. This is Sodium/potassium-transporting ATPase subunit alpha-1 (ATP1A1) from Pongo abelii (Sumatran orangutan).